A 180-amino-acid chain; its full sequence is Large ribosomal subunit protein uL6 (180 aa).

Belongs to the universal ribosomal protein uL6 family. Part of the 50S ribosomal subunit.

Its function is as follows. This protein binds to the 23S rRNA, and is important in its secondary structure. It is located near the subunit interface in the base of the L7/L12 stalk, and near the tRNA binding site of the peptidyltransferase center. This chain is Large ribosomal subunit protein uL6, found in Borreliella afzelii (strain PKo) (Borrelia afzelii).